We begin with the raw amino-acid sequence, 647 residues long: Exoribonuclease 2 (647 aa).

One can recognise an RNB domain in the interval 192–519 (RIDLTSLDFV…NHRLLKAIIQ (328 aa)). The S1 motif domain maps to 564–646 (EQRFTAEIID…ETRNIVARPT (83 aa)).

It belongs to the RNR ribonuclease family. RNase II subfamily.

Its subcellular location is the cytoplasm. It carries out the reaction Exonucleolytic cleavage in the 3'- to 5'-direction to yield nucleoside 5'-phosphates.. Involved in mRNA degradation. Hydrolyzes single-stranded polyribonucleotides processively in the 3' to 5' direction. This chain is Exoribonuclease 2, found in Photorhabdus laumondii subsp. laumondii (strain DSM 15139 / CIP 105565 / TT01) (Photorhabdus luminescens subsp. laumondii).